Reading from the N-terminus, the 183-residue chain is Large ribosomal subunit protein eL18 (183 aa).

Residues 150–183 form a disordered region; that stretch reads RHFGPAPGAPRSHTKPYVRTKGHEKARPSRRANV.

The protein belongs to the eukaryotic ribosomal protein eL18 family.

It localises to the cytoplasm. The chain is Large ribosomal subunit protein eL18 (RpL18) from Bombyx mori (Silk moth).